A 244-amino-acid polypeptide reads, in one-letter code: Phosphoadenosine 5'-phosphosulfate reductase (244 aa).

Residue Cys-239 is the Nucleophile; cysteine thiosulfonate intermediate of the active site.

Belongs to the PAPS reductase family. CysH subfamily.

Its subcellular location is the cytoplasm. It catalyses the reaction [thioredoxin]-disulfide + sulfite + adenosine 3',5'-bisphosphate + 2 H(+) = [thioredoxin]-dithiol + 3'-phosphoadenylyl sulfate. It participates in sulfur metabolism; hydrogen sulfide biosynthesis; sulfite from sulfate: step 3/3. Catalyzes the formation of sulfite from phosphoadenosine 5'-phosphosulfate (PAPS) using thioredoxin as an electron donor. This is Phosphoadenosine 5'-phosphosulfate reductase from Enterobacter sp. (strain 638).